We begin with the raw amino-acid sequence, 242 residues long: ATP synthase subunit a (242 aa).

5 helical membrane-spanning segments follow: residues Leu-21–Cys-41, Ala-83–Val-103, Asp-117–Ile-137, Leu-175–Asn-195, and Ala-198–Val-218.

The protein belongs to the ATPase A chain family. F-type ATPases have 2 components, CF(1) - the catalytic core - and CF(0) - the membrane proton channel. CF(1) has five subunits: alpha(3), beta(3), gamma(1), delta(1), epsilon(1). CF(0) has three main subunits: a(1), b(2) and c(9-12). The alpha and beta chains form an alternating ring which encloses part of the gamma chain. CF(1) is attached to CF(0) by a central stalk formed by the gamma and epsilon chains, while a peripheral stalk is formed by the delta and b chains.

The protein localises to the cell membrane. Its function is as follows. Key component of the proton channel; it plays a direct role in the translocation of protons across the membrane. This chain is ATP synthase subunit a, found in Staphylococcus aureus (strain Newman).